Consider the following 570-residue polypeptide: MANPKEKTAMCLVNELARFNRVQPQYKLLNERGPAHSKMFSVQLSLGEQTWESEGSSIKKAQQAVANKALTESTLPKPVQKPPKSNVNNNPGSITPTVELNGLAMKRGEPAIYRPLDPKPFPNYRANYNFRGMYNQRYHCPVPKIFYVQLTVGNNEFFGEGKTRQAARHNAAMKALQALQNEPIPERSPQNGESGKDVDDDKDANKSEISLVFEIALKRNMPVSFEVIKESGPPHMKSFVTRVSVGEFSAEGEGNSKKLSKKRAATTVLQELKKLPPLPVVEKPKLFFKKRPKTIVKAGPEYGQGMNPISRLAQIQQAKKEKEPDYVLLSERGMPRRREFVMQVKVGNEVATGTGPNKKIAKKNAAEAMLLQLGYKASTNLQDQLEKTGENKGWSGPKPGFPEPTNNTPKGILHLSPDVYQEMEASRHKVISGTTLGYLSPKDMNQPSSSFFSISPTSNSSATIARELLMNGTSSTAEAIGLKGSSPTPPCSPVQPSKQLEYLARIQGFQAALSALKQFSEQGLDPIDGAMNIEKGSLEKQAKHLREKADNNQAPPGSIAQDCKKSNSAV.

One can recognise a DRBM 1 domain in the interval 8–75 (TAMCLVNELA…ANKALTESTL (68 aa)). Disordered stretches follow at residues 71 to 94 (TEST…PGSI) and 181 to 203 (NEPI…DDKD). The span at 83 to 94 (PKSNVNNNPGSI) shows a compositional bias: polar residues. The region spanning 95–181 (TPTVELNGLA…AMKALQALQN (87 aa)) is the DRBM 2 domain. A Phosphoserine modification is found at S188. A compositionally biased stretch (basic and acidic residues) spans 194-203 (SGKDVDDDKD). 2 DRBM domains span residues 207–274 (SEIS…ELKK) and 307–375 (NPIS…QLGY). Short sequence motifs (nuclear localization signal) lie at residues 273-291 (KKLP…FKKR) and 373-412 (LGYK…PKGI). The segment at 381 to 570 (LQDQLEKTGE…QDCKKSNSAV (190 aa)) is required for dendritic transport. The disordered stretch occupies residues 387–409 (KTGENKGWSGPKPGFPEPTNNTP). S395 carries the post-translational modification Phosphoserine. T405 bears the Phosphothreonine mark. A phosphoserine mark is found at S416, S426, S440, S455, and S492. The disordered stretch occupies residues 528 to 570 (DGAMNIEKGSLEKQAKHLREKADNNQAPPGSIAQDCKKSNSAV). The segment covering 536-550 (GSLEKQAKHLREKAD) has biased composition (basic and acidic residues).

In terms of assembly, interacts with the exportin XPO5. This requires RNA and RAN bound to GTP. Interacts with microtubules. Isoform 2 and isoform 3 may also interact with ribosomes, and this association is independent of translation. Identified in a mRNP complex, at least composed of DHX9, DDX3X, ELAVL1, HNRNPU, IGF2BP1, ILF3, PABPC1, PCBP2, PTBP2, STAU1, STAU2, SYNCRIP and YBX1. Interacts with TRIM71 (via NHL repeats) in an RNA-dependent manner.

The protein resides in the cytoplasm. Its subcellular location is the nucleus. It is found in the nucleolus. The protein localises to the endoplasmic reticulum. RNA-binding protein required for the microtubule-dependent transport of neuronal RNA from the cell body to the dendrite. As protein synthesis occurs within the dendrite, the localization of specific mRNAs to dendrites may be a prerequisite for neurite outgrowth and plasticity at sites distant from the cell body. In Homo sapiens (Human), this protein is Double-stranded RNA-binding protein Staufen homolog 2 (STAU2).